A 193-amino-acid polypeptide reads, in one-letter code: MNTYKNSLNHFLNLVDCLEKIPNVGKKSAFKMAYHLGLENPYLALKITHALENALENLKTCSSCNALSESEVCEICSDESRQNSQLCMVLHPRDVFILEDLKDFLGRYYVLNSIEEVDFNALEKRLIEENIKEIIFAFPPTLANDSLMLYIEDKLQHFHLTFTKIAQGVPTGVNFENIDSVSLSRAFNSRIKA.

The C4-type zinc finger occupies 61–76 (CSSCNALSESEVCEIC). The 87-residue stretch at 84 to 170 (SQLCMVLHPR…TFTKIAQGVP (87 aa)) folds into the Toprim domain.

It belongs to the RecR family.

Functionally, may play a role in DNA repair. It seems to be involved in an RecBC-independent recombinational process of DNA repair. It may act with RecF and RecO. This Helicobacter pylori (strain P12) protein is Recombination protein RecR.